Consider the following 176-residue polypeptide: Secreted LysM effector ELP2 (176 aa).

An N-terminal signal peptide occupies residues 1–18; sequence MQFSIFTVLAAAASFAVA. Residues 31–45 are compositionally biased toward low complexity; it reads TSAAANPSPTTSGAA. Positions 31–50 are disordered; sequence TSAAANPSPTTSGAANPSPT. Residues 58-102 enclose the LysM 1 domain; it reads HKTTVKAGQTLTTIAERFHSGICDIAWQNKLENPNVIFVGQVLLV. N-linked (GlcNAc...) asparagine glycosylation is present at N111. Residues 129 to 173 enclose the LysM 2 domain; sequence ATYTIKSGDTFFAVAQSLGITTDSLTGANPGVVPENLQIDQVINV.

Belongs to the secreted LysM effector family. As to quaternary structure, forms homodimers in a chitin-independent manner through interactions at the N-termini of EPL2 monomers. Homodimers are further polymerized in a chitin-dependent manner.

It is found in the secreted. Its function is as follows. Secreted effector that enables the plant pathogenic fungus to manipulate host defenses for successful infection. Binds chitin oligomers and polymer with high affinity and plays a dual role, not only in the suppression of chitin-triggered immune responses, but also in appressorium function. Does not protect fungal hyphae against plant chitinases but suppresses chitin-triggered plant immune responses. Chitin-induced polymerization of homodimers forms a contiguous ELP2 highly oligomeric super-complexe that may precipitate at infection sites to eliminate chitin oligomers, and thus suppress the activation of chitin-induced plant immunity. The polypeptide is Secreted LysM effector ELP2 (Colletotrichum higginsianum (strain IMI 349063) (Crucifer anthracnose fungus)).